A 371-amino-acid polypeptide reads, in one-letter code: Leu/Ile/Val-binding protein homolog 1 (371 aa).

Positions 1–23 (MRKTLFSGVALAAVIAFGGSAWA) are cleaved as a signal peptide.

It belongs to the leucine-binding protein family.

Functionally, component of an amino-acid transport system. In Brucella melitensis biotype 1 (strain ATCC 23456 / CCUG 17765 / NCTC 10094 / 16M), this protein is Leu/Ile/Val-binding protein homolog 1.